Consider the following 142-residue polypeptide: Required for drug-induced death protein 1 (142 aa).

Disordered stretches follow at residues 1 to 32 and 46 to 66; these read MTVG…DEEA and EAAA…TRGA. The helical transmembrane segment at 116-138 threads the bilayer; it reads VVIGLQGFAAAYSAPFAVATSVV.

The protein localises to the membrane. Functionally, regulates drug efflux through modulation of ABCB1 localization and activity. This Homo sapiens (Human) protein is Required for drug-induced death protein 1.